The primary structure comprises 138 residues: Basic phospholipase A2 Cll-N6 (138 aa).

Residues 1-16 (MRTFWIVAVLLVGVEG) form the signal peptide. Intrachain disulfides connect C42–C131, C44–C60, C59–C111, C65–C138, C66–C104, C73–C97, and C91–C102. 3 residues coordinate Ca(2+): Y43, G45, and G47. H63 is a catalytic residue. Position 64 (D64) interacts with Ca(2+). The active site involves D105.

In terms of assembly, monomer. Ca(2+) serves as cofactor. In terms of tissue distribution, expressed by the venom gland.

It localises to the secreted. The enzyme catalyses a 1,2-diacyl-sn-glycero-3-phosphocholine + H2O = a 1-acyl-sn-glycero-3-phosphocholine + a fatty acid + H(+). Functionally, snake venom phospholipase A2 (PLA2) that shows myotoxic activities. PLA2 catalyzes the calcium-dependent hydrolysis of the 2-acyl groups in 3-sn-phosphoglycerides. This is Basic phospholipase A2 Cll-N6 from Crotalus lepidus lepidus (Mottled rock rattlesnake).